Consider the following 932-residue polypeptide: Lipoxygenase 2.2, chloroplastic (932 aa).

Residues 79-219 (MKATVSVHMK…CSPDKRTFFP (141 aa)) enclose the PLAT domain. Residues 223-932 (SYIPSQTPKG…EMGIPNSISI (710 aa)) enclose the Lipoxygenase domain. The segment covering 270 to 284 (PESKRPVLGGKEHPY) has biased composition (basic and acidic residues). The segment at 270–311 (PESKRPVLGGKEHPYPRRCRTGRPRSKTDPSSEEESHKKGEM) is disordered. The span at 285-294 (PRRCRTGRPR) shows a compositional bias: basic residues. A compositionally biased stretch (basic and acidic residues) spans 295-311 (SKTDPSSEEESHKKGEM). His588, His593, His778, Asn782, and Ile932 together coordinate Fe cation.

This sequence belongs to the lipoxygenase family. It depends on Fe cation as a cofactor.

Its subcellular location is the plastid. The protein resides in the chloroplast. The enzyme catalyses (9Z,12Z)-octadecadienoate + O2 = (13S)-hydroperoxy-(9Z,11E)-octadecadienoate. It carries out the reaction (9Z,12Z,15Z)-octadecatrienoate + O2 = (13S)-hydroperoxy-(9Z,11E,15Z)-octadecatrienoate. It participates in lipid metabolism; oxylipin biosynthesis. Plant lipoxygenase may be involved in a number of diverse aspects of plant physiology including growth and development, pest resistance, and senescence or responses to wounding. This enzyme exhibits linoleate 13-lipoxygenase activity. In Hordeum vulgare (Barley), this protein is Lipoxygenase 2.2, chloroplastic (LOX2.2).